Consider the following 376-residue polypeptide: 3-dehydroquinate synthase (376 aa).

Residues 115 to 119, 139 to 140, Lys152, and Lys161 each bind NAD(+); these read GVIGD and TS. Residues Glu194, His256, and His275 each coordinate Zn(2+).

This sequence belongs to the sugar phosphate cyclases superfamily. Dehydroquinate synthase family. The cofactor is Co(2+). Zn(2+) is required as a cofactor. It depends on NAD(+) as a cofactor.

It is found in the cytoplasm. The catalysed reaction is 7-phospho-2-dehydro-3-deoxy-D-arabino-heptonate = 3-dehydroquinate + phosphate. It functions in the pathway metabolic intermediate biosynthesis; chorismate biosynthesis; chorismate from D-erythrose 4-phosphate and phosphoenolpyruvate: step 2/7. In terms of biological role, catalyzes the conversion of 3-deoxy-D-arabino-heptulosonate 7-phosphate (DAHP) to dehydroquinate (DHQ). This chain is 3-dehydroquinate synthase, found in Rhizobium leguminosarum bv. trifolii (strain WSM2304).